A 343-amino-acid polypeptide reads, in one-letter code: Cyclin-Y-like protein 1-B (343 aa).

The disordered stretch occupies residues 1-69; that stretch reads MGNTVTCCVS…ECNPSDHPQA (69 aa). Basic and acidic residues predominate over residues 17 to 28; the sequence is AGRDRRVAERGE. The region spanning 145–267 is the Cyclin N-terminal domain; sequence DIFDEKLHPL…FLELLQFNIN (123 aa).

Belongs to the cyclin family. Cyclin Y subfamily.

The chain is Cyclin-Y-like protein 1-B (ccnyl1-b) from Xenopus laevis (African clawed frog).